The following is a 158-amino-acid chain: Secreted frizzled-related protein 1 (158 aa).

Residues 1 to 34 (VRDSCEPVMQFFGFYWPEMLKCDKFPEGDVCIAM) enclose the FZ domain. N38 carries an N-linked (GlcNAc...) asparagine glycan. 2 cysteine pairs are disulfide-bonded: C51–C121 and C68–C123. An NTR domain is found at 51 to 158 (CPPCDNELKS…IHKWDKKNKE (108 aa)).

Belongs to the secreted frizzled-related protein (sFRP) family. In terms of assembly, interacts with WNT4, WNT1, WNT2, WNT8, MYOC and FRZD6.

It localises to the secreted. In terms of biological role, soluble frizzled-related proteins (sFRPS) function as modulators of Wnt signaling through direct interaction with Wnts. They have a role in regulating cell growth and differentiation in specific cell types. SFRP1 decreases intracellular beta-catenin levels. Has antiproliferative effects on vascular cells, in vitro and in vivo, and can induce, in vivo, an angiogenic response. In vascular cell cycle, delays the G1 phase and entry into the S phase. In kidney development, inhibits tubule formation and bud growth in metanephroi. Inhibits WNT1/WNT4-mediated TCF-dependent transcription. The protein is Secreted frizzled-related protein 1 (Sfrp1) of Rattus norvegicus (Rat).